A 329-amino-acid chain; its full sequence is MSGKYLVTGGAGYVGSVVAQHLVEAGNEVVVLHNLSTGFRAGVPAGASFYRGDIRDQDFMRKVFRGRLSFDGVLHFAAFSQVGESVVKPEKYWDNNVGGTMALLEAMRGAGVRRLVFSSTAATYGEPEQVPIVESAPTRPTNPYGASKLAVDHMITGEAAAHGLGAVSVPYFNVAGANRGVRLVHDPESHLIPLVLQVAQGRREAISVYGDDYPTPDTCVRDYIHVADLAEAHLLAVRRRPGNEHLICNLGNGNGFSVREVVETVRRVTGHPIPEIMAPRRGRDPAVLVASAGTAREKLGWNPSRADLAIVSDAWEWHSSHPKGYDDRG.

Residues 13–14 (YV), 33–38 (HNLSTG), 53–54 (DI), 76–80 (FAAFS), asparagine 95, threonine 120, tyrosine 144, lysine 148, and phenylalanine 172 each bind NAD(+). Residues threonine 120 and tyrosine 144 each contribute to the substrate site. The Proton acceptor role is filled by tyrosine 144. Substrate is bound by residues asparagine 173, 190-191 (HL), 207-209 (SVY), arginine 221, and 281-284 (RGRD).

This sequence belongs to the NAD(P)-dependent epimerase/dehydratase family. Homodimer. NAD(+) is required as a cofactor.

It catalyses the reaction UDP-alpha-D-glucose = UDP-alpha-D-galactose. It functions in the pathway carbohydrate metabolism; galactose metabolism. Involved in the metabolism of galactose. Catalyzes the conversion of UDP-galactose (UDP-Gal) to UDP-glucose (UDP-Glc) through a mechanism involving the transient reduction of NAD. This Streptomyces lividans protein is UDP-glucose 4-epimerase (galE).